We begin with the raw amino-acid sequence, 368 residues long: Cyclin-dependent kinase 2 (368 aa).

The region spanning 45-330 is the Protein kinase domain; sequence FCSLRRIGEG…AKGALSHRYF (286 aa). ATP contacts are provided by residues 51–59 and K74; that span reads IGEGTYGVV. D170 serves as the catalytic Proton acceptor. Residues N175 and D188 each coordinate Mg(2+).

This sequence belongs to the protein kinase superfamily. CMGC Ser/Thr protein kinase family. CDC2/CDKX subfamily. Interacts with cye-1; the interaction likely regulates cdk-2 activity and is probably required for gld-1 phosphorylation. The cofactor is Mg(2+).

It catalyses the reaction L-seryl-[protein] + ATP = O-phospho-L-seryl-[protein] + ADP + H(+). The catalysed reaction is L-threonyl-[protein] + ATP = O-phospho-L-threonyl-[protein] + ADP + H(+). Its function is as follows. Serine/threonine-protein kinase which, in association with cye-1, regulates proliferation, quiescent state and cell fate during the development of several cell lineages. In the embryo, initiates the establishment of cell polarity through the recruitment of the centrosomal proteins spd-2 and spd-5 during prophase. Phosphorylation and inhibition of the translational repressor gld-1 by the cdk-2/cye-1 complex regulates the pool of germline stem cells and the size of the mitotic zone in the gonads by preventing entry into meiosis. This is Cyclin-dependent kinase 2 from Caenorhabditis elegans.